The sequence spans 1482 residues: Cystic fibrosis transmembrane conductance regulator (1482 aa).

The Cytoplasmic portion of the chain corresponds to 1–77 (MQKSPLERAS…KLINALRRCF (77 aa)). A helical transmembrane segment spans residues 78–98 (FWRFVFYGILLYLGEVTKAVQ). Residues 81-365 (FVFYGILLYL…WAVQTWYDSL (285 aa)) form the ABC transmembrane type-1 1 domain. Residues 99–122 (PLLLGRIIASYDPDNKVERSIAIY) lie on the Extracellular side of the membrane. A helical membrane pass occupies residues 123–146 (LAIGLCLLFIVRTLLLHPAIFGLH). Residues 147 to 195 (HMGMQMRIAMFSLIYKKTLKLSSRVLDKISIGQLVSLLSNNLNKFDEGL) are Cytoplasmic-facing. The helical transmembrane segment at 196 to 216 (ALAHFVWIAPLQVTLLMGLIW) threads the bilayer. Over 217 to 222 (DLLQAS) the chain is Extracellular. A helical transmembrane segment spans residues 223–243 (AFCGLAFLIIVALGQAGLGRM). The Cytoplasmic segment spans residues 244 to 298 (MMKYRDKRAGKINERLVITSEMIENIQSVKAYCWEEAMEKMIENLRQIELRLTRK). The helical transmembrane segment at 299 to 319 (AAYVRYFNSAAFFFSGFFVVF) threads the bilayer. Over 320–339 (LSVLPYAMLKGIILRKIFTT) the chain is Extracellular. A helical transmembrane segment spans residues 340 to 358 (ISFCIVLRMAVTRQFPWAV). Over 359–858 (QTWYDSLGAI…YLRYVTVHKS (500 aa)) the chain is Cytoplasmic. Residues tryptophan 401, serine 434, 458–465 (GSTGAGKT), and glutamine 493 contribute to the ATP site. The ABC transporter 1 domain maps to 423–646 (NGDNSLFFSN…RPDFSSELMG (224 aa)). A lipid anchor (S-palmitoyl cysteine) is attached at cysteine 524. Residues serine 549 and serine 660 each carry the phosphoserine modification. A disordered R region region spans residues 654–831 (SAERRNSILT…EEINEEDLKE (178 aa)). Serine 670 is subject to Phosphoserine; by PKA. The residue at position 685 (serine 685) is a Phosphoserine. Residue lysine 687 forms a Glycyl lysine isopeptide (Lys-Gly) (interchain with G-Cter in ubiquitin) linkage. Residues serine 699 and serine 711 each carry the phosphoserine modification. A Phosphothreonine modification is found at threonine 716. Phosphoserine occurs at positions 736, 767, 790, 795, and 813. Residues 859–879 (LIFVLIWCLVVFLAEVAVSLV) traverse the membrane as a helical segment. The ABC transmembrane type-1 2 domain occupies 859–1156 (LIFVLIWCLV…AVNSSIDVDS (298 aa)). At 880-919 (VLYLLRTSSLQDKGNNTTVNANSSYGVIVTNTSSYYLLYI) the chain is on the extracellular side. N-linked (GlcNAc...) asparagine glycans are attached at residues asparagine 894, asparagine 895, asparagine 901, and asparagine 910. A discontinuously helical membrane pass occupies residues 920–940 (YVGIADSLFALAIFRGLPLVH). Residues 941-991 (TLIKVSKTLHHKMLRSILQAPMSTFNTLKAGRILNRFSKDIAILDDLLPLT) lie on the Cytoplasmic side of the membrane. The chain crosses the membrane as a helical span at residues 992-1012 (MFDFIQLLLIVIGAVVVVSVL). Residues 1013–1014 (QP) are Extracellular-facing. The chain crosses the membrane as a helical span at residues 1015-1035 (YIFLATVPVIAAFIILRAYFL). The Cytoplasmic portion of the chain corresponds to 1036–1096 (HTSQQLKQLE…TANWFLYLST (61 aa)). Residues 1097-1117 (LRWFQMRIEIIFVIFFIAVTF) form a helical membrane-spanning segment. The Extracellular portion of the chain corresponds to 1118-1131 (VSILTTGEGEGTIG). The chain crosses the membrane as a helical span at residues 1132 to 1152 (IILTLAMNIMNTLQWAVNSSI). At 1153–1482 (DVDSLMRSVS…TEEEVQETRL (330 aa)) the chain is on the cytoplasmic side. The ABC transporter 2 domain occupies 1212–1445 (MTVKDLTAKY…KSLFRQAISP (234 aa)). Residues tyrosine 1221 and 1246–1253 (GRTGSGKS) each bind ATP. The segment at 1388-1482 (RTLKQAFADC…TEEEVQETRL (95 aa)) is interaction with GORASP2. Cysteine 1397 is lipidated: S-palmitoyl cysteine. The span at 1454–1463 (HRNSSRHRSR) shows a compositional bias: basic residues. The tract at residues 1454–1482 (HRNSSRHRSRSQIAALKEETEEEVQETRL) is disordered. A Phosphoserine modification is found at serine 1458. Residues 1472–1482 (ETEEEVQETRL) show a composition bias toward acidic residues. The short motif at 1480–1482 (TRL) is the PDZ-binding element.

This sequence belongs to the ABC transporter superfamily. ABCC family. CFTR transporter (TC 3.A.1.202) subfamily. Monomer; does not require oligomerization for channel activity. May form oligomers in the membrane. Interacts with SLC26A3, SLC26A6 and NHERF1. Interacts with SHANK2. Interacts with MYO6. Interacts (via C-terminus) with GOPC (via PDZ domain); this promotes CFTR internalization and thereby decreases channel activity. Interacts with SLC4A7 through NHERF1. Found in a complex with MYO5B and RAB11A. Interacts with ANO1. Interacts with SLC26A8. Interacts with AHCYL1; the interaction increases CFTR activity. Interacts with CSE1L. The core-glycosylated form interacts with GORASP2 (via PDZ GRASP-type 1 domain) in respone to ER stress. Interacts with MARCHF2; the interaction leads to CFTR ubiqtuitination and degradation. Interacts with ADGRG2. Post-translationally, N-glycosylated. Phosphorylated; cAMP treatment promotes phosphorylation and activates the channel. Dephosphorylation decreases the ATPase activity (in vitro). Phosphorylation at PKA sites activates the channel. Phosphorylation at PKC sites enhances the response to phosphorylation by PKA. Phosphorylated by AMPK; this inhibits channel activity. In terms of processing, ubiquitinated, leading to its degradation in the lysosome. Deubiquitination by USP10 in early endosomes enhances its endocytic recycling to the cell membrane. Ubiquitinated by RNF185 during ER stress. Ubiquitinated by MARCHF2.

It is found in the apical cell membrane. The protein resides in the early endosome membrane. It localises to the cell membrane. Its subcellular location is the recycling endosome membrane. The protein localises to the endoplasmic reticulum membrane. It is found in the nucleus. The enzyme catalyses ATP + H2O + closed Cl(-) channel = ADP + phosphate + open Cl(-) channel.. The catalysed reaction is chloride(in) = chloride(out). It catalyses the reaction hydrogencarbonate(in) = hydrogencarbonate(out). It carries out the reaction ATP + H2O = ADP + phosphate + H(+). Its function is as follows. Epithelial ion channel that plays an important role in the regulation of epithelial ion and water transport and fluid homeostasis. Mediates the transport of chloride ions across the cell membrane. Possesses an intrinsic ATPase activity and utilizes ATP to gate its channel; the passive flow of anions through the channel is gated by cycles of ATP binding and hydrolysis by the ATP-binding domains. The ion channel is also permeable to HCO(3)(-); selectivity depends on the extracellular chloride concentration. Exerts its function also by modulating the activity of other ion channels and transporters. Contributes to the regulation of the pH and the ion content of the epithelial fluid layer. Modulates the activity of the epithelial sodium channel (ENaC) complex, in part by regulating the cell surface expression of the ENaC complex. May regulate bicarbonate secretion and salvage in epithelial cells by regulating the transporter SLC4A7. Can inhibit the chloride channel activity of ANO1. Plays a role in the chloride and bicarbonate homeostasis during sperm epididymal maturation and capacitation. This chain is Cystic fibrosis transmembrane conductance regulator, found in Loxodonta africana (African elephant).